A 326-amino-acid chain; its full sequence is D-allose transport system permease protein AlsC (326 aa).

The Cytoplasmic portion of the chain corresponds to 1 to 18 (MGFTTRVKSEASEKKPFN). The chain crosses the membrane as a helical span at residues 19 to 39 (FALFWDKYGTFFILAIIVAIF). Residues 40 to 70 (GSLSPEYFLTTNNITQIFVQSSVTVLIGMGE) lie on the Periplasmic side of the membrane. The helical transmembrane segment at 71-91 (FFAILVAGIDLSVGAILALSG) threads the bilayer. Over 92–101 (MVTAKLMLAG) the chain is Cytoplasmic. The helical transmembrane segment at 102 to 122 (VDPFLAAMIGGVLVGGALGAI) threads the bilayer. Topologically, residues 123–124 (NG) are periplasmic. A helical transmembrane segment spans residues 125–145 (CLVNWTGLHPFIITLGTNAIF). Residues 146–149 (RGIT) lie on the Cytoplasmic side of the membrane. Residues 150-170 (LVISDANSVYGFSFDFVNFFA) traverse the membrane as a helical segment. Over 171–172 (AS) the chain is Periplasmic. A helical membrane pass occupies residues 173 to 193 (VIGIPVPVIFSLIVALILWFL). Residues 194 to 221 (TTRMRLGRNIYALGGNKNSAFYSGIDVK) lie on the Cytoplasmic side of the membrane. A helical transmembrane segment spans residues 222 to 242 (FHILVVFIISGVCAGLAGVVS). Residues 243-252 (TARLGAAEPL) are Periplasmic-facing. Residues 253 to 273 (AGMGFETYAIASAIIGGTSFF) traverse the membrane as a helical segment. The Cytoplasmic portion of the chain corresponds to 274 to 278 (GGKGR). A run of 2 helical transmembrane segments spans residues 279 to 299 (IFSV…LNIL) and 300 to 320 (QVQT…AVAL). Over 321–326 (DRLISK) the chain is Cytoplasmic.

Belongs to the binding-protein-dependent transport system permease family. AraH/RbsC subfamily.

The protein localises to the cell inner membrane. In terms of biological role, part of the binding-protein-dependent transport system AlsBAC for D-allose; probably responsible for the translocation of the substrate across the membrane. This chain is D-allose transport system permease protein AlsC (alsC), found in Escherichia coli (strain K12).